The following is a 675-amino-acid chain: UvrABC system protein B (675 aa).

Residues 35–192 (QGMRDGLMYQ…ARLVAMQYTR (158 aa)) enclose the Helicase ATP-binding domain. 48-55 (GVTGSGKT) serves as a coordination point for ATP. The Beta-hairpin signature appears at 101–124 (YYDYYQPEAYVPTRDLFIEKDSSI). One can recognise a Helicase C-terminal domain in the interval 439 to 605 (QVDDLLGEIK…GVNKAVRELI (167 aa)). Residues 633–668 (AREIRRLEKLMTDHARNLEFEQAAAARDALNALKQR) form the UVR domain.

Belongs to the UvrB family. As to quaternary structure, forms a heterotetramer with UvrA during the search for lesions. Interacts with UvrC in an incision complex.

Its subcellular location is the cytoplasm. Its function is as follows. The UvrABC repair system catalyzes the recognition and processing of DNA lesions. A damage recognition complex composed of 2 UvrA and 2 UvrB subunits scans DNA for abnormalities. Upon binding of the UvrA(2)B(2) complex to a putative damaged site, the DNA wraps around one UvrB monomer. DNA wrap is dependent on ATP binding by UvrB and probably causes local melting of the DNA helix, facilitating insertion of UvrB beta-hairpin between the DNA strands. Then UvrB probes one DNA strand for the presence of a lesion. If a lesion is found the UvrA subunits dissociate and the UvrB-DNA preincision complex is formed. This complex is subsequently bound by UvrC and the second UvrB is released. If no lesion is found, the DNA wraps around the other UvrB subunit that will check the other stand for damage. This chain is UvrABC system protein B, found in Bordetella petrii (strain ATCC BAA-461 / DSM 12804 / CCUG 43448).